We begin with the raw amino-acid sequence, 519 residues long: Glutamate--cysteine ligase (519 aa).

This sequence belongs to the glutamate--cysteine ligase type 1 family. Type 1 subfamily.

The enzyme catalyses L-cysteine + L-glutamate + ATP = gamma-L-glutamyl-L-cysteine + ADP + phosphate + H(+). It participates in sulfur metabolism; glutathione biosynthesis; glutathione from L-cysteine and L-glutamate: step 1/2. This Yersinia enterocolitica serotype O:8 / biotype 1B (strain NCTC 13174 / 8081) protein is Glutamate--cysteine ligase.